The sequence spans 176 residues: Large ribosomal subunit protein uL30 (176 aa).

It belongs to the universal ribosomal protein uL30 family. Part of the 50S ribosomal subunit.

This is Large ribosomal subunit protein uL30 from Pyrobaculum arsenaticum (strain DSM 13514 / JCM 11321 / PZ6).